The sequence spans 314 residues: Homoserine kinase (314 aa).

ATP is bound at residue 96–106 (PIGSGLGSSAC).

It belongs to the GHMP kinase family. Homoserine kinase subfamily.

It localises to the cytoplasm. It catalyses the reaction L-homoserine + ATP = O-phospho-L-homoserine + ADP + H(+). It functions in the pathway amino-acid biosynthesis; L-threonine biosynthesis; L-threonine from L-aspartate: step 4/5. Its function is as follows. Catalyzes the ATP-dependent phosphorylation of L-homoserine to L-homoserine phosphate. This is Homoserine kinase from Mannheimia succiniciproducens (strain KCTC 0769BP / MBEL55E).